The following is a 118-amino-acid chain: UPF0342 protein LCK_01004 (118 aa).

This sequence belongs to the UPF0342 family.

The sequence is that of UPF0342 protein LCK_01004 from Leuconostoc citreum (strain KM20).